We begin with the raw amino-acid sequence, 211 residues long: Large ribosomal subunit protein eL13 (211 aa).

It belongs to the eukaryotic ribosomal protein eL13 family. In terms of assembly, component of the 60S large ribosomal subunit (LSU).

It is found in the cytoplasm. Component of the ribosome, a large ribonucleoprotein complex responsible for the synthesis of proteins in the cell. The small ribosomal subunit (SSU) binds messenger RNAs (mRNAs) and translates the encoded message by selecting cognate aminoacyl-transfer RNA (tRNA) molecules. The large subunit (LSU) contains the ribosomal catalytic site termed the peptidyl transferase center (PTC), which catalyzes the formation of peptide bonds, thereby polymerizing the amino acids delivered by tRNAs into a polypeptide chain. The nascent polypeptides leave the ribosome through a tunnel in the LSU and interact with protein factors that function in enzymatic processing, targeting, and the membrane insertion of nascent chains at the exit of the ribosomal tunnel. As part of the LSU, it is probably required for its formation and the maturation of rRNAs. The polypeptide is Large ribosomal subunit protein eL13 (rpl13) (Ictalurus punctatus (Channel catfish)).